The following is a 316-amino-acid chain: Ornithine carbamoyltransferase (316 aa).

Residues 59–62 (STRT), Gln-86, Arg-110, and 137–140 (HPCQ) each bind carbamoyl phosphate. L-ornithine is bound by residues Asn-168, Asp-232, and 236 to 237 (SM). Carbamoyl phosphate-binding positions include 273 to 274 (CL) and Arg-301.

The protein belongs to the aspartate/ornithine carbamoyltransferase superfamily. OTCase family.

The protein resides in the cytoplasm. The catalysed reaction is carbamoyl phosphate + L-ornithine = L-citrulline + phosphate + H(+). Its pathway is amino-acid biosynthesis; L-arginine biosynthesis; L-arginine from L-ornithine and carbamoyl phosphate: step 1/3. Reversibly catalyzes the transfer of the carbamoyl group from carbamoyl phosphate (CP) to the N(epsilon) atom of ornithine (ORN) to produce L-citrulline. The sequence is that of Ornithine carbamoyltransferase from Listeria monocytogenes serotype 4b (strain F2365).